Consider the following 101-residue polypeptide: Cysteine-rich and transmembrane domain-containing protein B (101 aa).

The interval 1–80 is disordered; sequence MSQQPPAVGV…PQQQQQQKHS (80 aa). The segment covering 24–43 has biased composition (pro residues); it reads DAYPPPGQPYPQQGYPPPQG. Residues 59–77 show a composition bias toward low complexity; the sequence is YPEQGYPQQGYPPQQQQQQ. Residues 78–95 traverse the membrane as a helical segment; it reads KHSPGMLEGCIAALCCYC.

Belongs to the CYSTM1 family.

The protein resides in the membrane. This chain is Cysteine-rich and transmembrane domain-containing protein B, found in Arabidopsis thaliana (Mouse-ear cress).